We begin with the raw amino-acid sequence, 185 residues long: UPF0301 protein Csal_0058 (185 aa).

The protein belongs to the UPF0301 (AlgH) family.

The chain is UPF0301 protein Csal_0058 from Chromohalobacter salexigens (strain ATCC BAA-138 / DSM 3043 / CIP 106854 / NCIMB 13768 / 1H11).